Reading from the N-terminus, the 248-residue chain is DNA repair protein RecO (248 aa).

It belongs to the RecO family.

Its function is as follows. Involved in DNA repair and RecF pathway recombination. In Bradyrhizobium sp. (strain BTAi1 / ATCC BAA-1182), this protein is DNA repair protein RecO.